Consider the following 264-residue polypeptide: Indole-3-glycerol phosphate synthase (264 aa).

This sequence belongs to the TrpC family.

It catalyses the reaction 1-(2-carboxyphenylamino)-1-deoxy-D-ribulose 5-phosphate + H(+) = (1S,2R)-1-C-(indol-3-yl)glycerol 3-phosphate + CO2 + H2O. The protein operates within amino-acid biosynthesis; L-tryptophan biosynthesis; L-tryptophan from chorismate: step 4/5. The sequence is that of Indole-3-glycerol phosphate synthase from Xylella fastidiosa (strain M23).